The primary structure comprises 78 residues: UPF0349 protein Sca_0544 (78 aa).

It belongs to the UPF0349 family.

The chain is UPF0349 protein Sca_0544 from Staphylococcus carnosus (strain TM300).